A 424-amino-acid polypeptide reads, in one-letter code: Tyrosine--tRNA ligase (424 aa).

Tyr37 lines the L-tyrosine pocket. Residues Pro42–His51 carry the 'HIGH' region motif. Lys144 carries the N6-acetyllysine modification. Residues Tyr175 and Gln179 each contribute to the L-tyrosine site. Residues Lys235 to Thr239 carry the 'KMSKS' region motif. Position 238 (Lys238) interacts with ATP. The S4 RNA-binding domain maps to Ala357–Gly414.

It belongs to the class-I aminoacyl-tRNA synthetase family. TyrS type 1 subfamily. As to quaternary structure, homodimer.

Its subcellular location is the cytoplasm. It catalyses the reaction tRNA(Tyr) + L-tyrosine + ATP = L-tyrosyl-tRNA(Tyr) + AMP + diphosphate + H(+). In terms of biological role, catalyzes the attachment of tyrosine to tRNA(Tyr) in a two-step reaction: tyrosine is first activated by ATP to form Tyr-AMP and then transferred to the acceptor end of tRNA(Tyr). The sequence is that of Tyrosine--tRNA ligase from Escherichia coli O8 (strain IAI1).